We begin with the raw amino-acid sequence, 38 residues long: MKVRASVKKLCRNCKIIRRDGIVRVICSAEPRHKQRQG.

This sequence belongs to the bacterial ribosomal protein bL36 family.

This is Large ribosomal subunit protein bL36A from Pseudomonas aeruginosa (strain UCBPP-PA14).